The primary structure comprises 180 residues: NAD(P)H-quinone oxidoreductase subunit I, chloroplastic (180 aa).

4Fe-4S ferredoxin-type domains lie at 55 to 84 and 95 to 124; these read GRIH…VDWR and LNYS…MTEE. Positions 64, 67, 70, 74, 104, 107, 110, and 114 each coordinate [4Fe-4S] cluster.

The protein belongs to the complex I 23 kDa subunit family. NDH is composed of at least 16 different subunits, 5 of which are encoded in the nucleus. The cofactor is [4Fe-4S] cluster.

The protein resides in the plastid. The protein localises to the chloroplast thylakoid membrane. It catalyses the reaction a plastoquinone + NADH + (n+1) H(+)(in) = a plastoquinol + NAD(+) + n H(+)(out). It carries out the reaction a plastoquinone + NADPH + (n+1) H(+)(in) = a plastoquinol + NADP(+) + n H(+)(out). Its function is as follows. NDH shuttles electrons from NAD(P)H:plastoquinone, via FMN and iron-sulfur (Fe-S) centers, to quinones in the photosynthetic chain and possibly in a chloroplast respiratory chain. The immediate electron acceptor for the enzyme in this species is believed to be plastoquinone. Couples the redox reaction to proton translocation, and thus conserves the redox energy in a proton gradient. The sequence is that of NAD(P)H-quinone oxidoreductase subunit I, chloroplastic from Zea mays (Maize).